The chain runs to 165 residues: Disulfide bond formation protein B (165 aa).

Topologically, residues 1-11 (MICSKVPVRAW) are cytoplasmic. The helical transmembrane segment at 12–28 (FATLGLGCLGLVAVGMA) threads the bilayer. At 29–46 (LQTLLHLAPCPLCIFQRL) the chain is on the periplasmic side. An intrachain disulfide couples Cys-38 to Cys-41. The helical transmembrane segment at 47–61 (LYIMIGFVGLLGFVL) threads the bilayer. The Cytoplasmic segment spans residues 62–66 (PAGRL). The chain crosses the membrane as a helical span at residues 67–84 (LWSTLAAGLGVLGFGVAA). Residues 85 to 142 (YQTWMQAFPDLAPECGFTDPNAIERLVDWLGMEWPSMFLATGFCTSRDWELLGLSMAN) are Periplasmic-facing. Cys-99 and Cys-128 are oxidised to a cystine. A helical transmembrane segment spans residues 143-161 (WSVLIFAGIVAYAVLLFVR). Over 162-165 (KDRA) the chain is Cytoplasmic.

It belongs to the DsbB family.

The protein localises to the cell inner membrane. Functionally, required for disulfide bond formation in some periplasmic proteins. Acts by oxidizing the DsbA protein. The sequence is that of Disulfide bond formation protein B from Dechloromonas aromatica (strain RCB).